A 548-amino-acid chain; its full sequence is MNHHEVHAVSAFAMSGFEQSLVFAIDGGGDFLSGLMAVGSGTVIAQLVSFPEHNSLGLFYLETIRYLGCGMFDEYKVMGLAPYGDPDRYRELFAQFYELLDSGGYRVHLDRIGPALLRNIQVRRKGMPFTQQHRDVSASLQEALERIVFHTLRHHRKATGMTRLCLAGGVAHNCTLNGKLLYSGLFDDIFVQPAAHDAGCALGAALMVSSELGRPAPRERLPDVYWGPDLGNEQATELELNAWSGHLDIQRSDDIASSAADWMANGAVIGWVQGRSEFGPRALGNRSILADPRPAENKDRINAVVKKRESYRPFAPSALEEDASEFFELPDGTRQLPFMNFVVRVREAKGNVLGAITHVDGTARLQTVSRKTNPAYWDVINAFKKRTSLPILLNTSFNNNAEPIVQSVSDAITTFLTTDLDGLVVGPFLVRKRPASLQDWSALAASLPPYASLHRVRSHIAPDRQETVCEIRMGHSAHSSMRISPELFEILMRIEGEASLGSLFDTALLDQAKREDLVKELRLVWELRGVRLHPLHAACRHDNVQSGT.

This sequence belongs to the NodU/CmcH family.

In terms of biological role, involved in 6-O-carbamoylation of Nod-factors. The sequence is that of Nodulation protein NolO (nolO) from Bradyrhizobium diazoefficiens (strain JCM 10833 / BCRC 13528 / IAM 13628 / NBRC 14792 / USDA 110).